The chain runs to 203 residues: Small ribosomal subunit protein uS4 (203 aa).

In terms of domain architecture, S4 RNA-binding spans 93–173; sequence RRLDNVVFRS…FPSWIQVDKA (81 aa).

It belongs to the universal ribosomal protein uS4 family. Part of the 30S ribosomal subunit. Contacts protein S5. The interaction surface between S4 and S5 is involved in control of translational fidelity.

One of the primary rRNA binding proteins, it binds directly to 16S rRNA where it nucleates assembly of the body of the 30S subunit. Its function is as follows. With S5 and S12 plays an important role in translational accuracy. The sequence is that of Small ribosomal subunit protein uS4 from Chlorobium limicola (strain DSM 245 / NBRC 103803 / 6330).